Reading from the N-terminus, the 222-residue chain is Pyridoxine/pyridoxamine 5'-phosphate oxidase (222 aa).

Residues 11-14 (RVEY) and Lys79 contribute to the substrate site. FMN is bound by residues 74 to 79 (RTVLCK), 89 to 90 (YT), Lys96, and Gln118. Substrate is bound by residues Tyr136, Arg140, and Ser144. FMN contacts are provided by residues 153 to 154 (QS) and Trp199. 205–207 (RVH) is a binding site for substrate. Residue Arg209 participates in FMN binding.

This sequence belongs to the pyridoxamine 5'-phosphate oxidase family. In terms of assembly, homodimer. Requires FMN as cofactor.

The catalysed reaction is pyridoxamine 5'-phosphate + O2 + H2O = pyridoxal 5'-phosphate + H2O2 + NH4(+). It carries out the reaction pyridoxine 5'-phosphate + O2 = pyridoxal 5'-phosphate + H2O2. The protein operates within cofactor metabolism; pyridoxal 5'-phosphate salvage; pyridoxal 5'-phosphate from pyridoxamine 5'-phosphate: step 1/1. It functions in the pathway cofactor metabolism; pyridoxal 5'-phosphate salvage; pyridoxal 5'-phosphate from pyridoxine 5'-phosphate: step 1/1. Functionally, catalyzes the oxidation of either pyridoxine 5'-phosphate (PNP) or pyridoxamine 5'-phosphate (PMP) into pyridoxal 5'-phosphate (PLP). This chain is Pyridoxine/pyridoxamine 5'-phosphate oxidase, found in Mycolicibacterium vanbaalenii (strain DSM 7251 / JCM 13017 / BCRC 16820 / KCTC 9966 / NRRL B-24157 / PYR-1) (Mycobacterium vanbaalenii).